The sequence spans 257 residues: Snake venom serine protease nikobin (257 aa).

A signal peptide spans 1–18; the sequence is MVLIRVLANLLLLQLSYA. A propeptide spanning residues 19–24 is cleaved from the precursor; it reads QKSSEL. The Peptidase S1 domain maps to 25–248; the sequence is VIGGDECNIN…YSDWIQSIIA (224 aa). Disulfide bonds link cysteine 31-cysteine 162, cysteine 49-cysteine 65, cysteine 97-cysteine 255, cysteine 141-cysteine 209, cysteine 173-cysteine 188, and cysteine 199-cysteine 224. Catalysis depends on charge relay system residues histidine 64 and aspartate 109. 2 N-linked (GlcNAc...) asparagine glycosylation sites follow: asparagine 120 and asparagine 121. Serine 203 functions as the Charge relay system in the catalytic mechanism. N-linked (GlcNAc...) asparagine glycosylation occurs at asparagine 250.

This sequence belongs to the peptidase S1 family. Snake venom subfamily. As to quaternary structure, monomer. In terms of tissue distribution, expressed by the venom gland.

The protein localises to the secreted. Functionally, snake venom serine protease that may act in the hemostasis system of the prey. This chain is Snake venom serine protease nikobin (sp-VN), found in Vipera nikolskii (Nikolsky's adder).